The chain runs to 746 residues: Probable ubiquitin carboxyl-terminal hydrolase MINDY-4 (746 aa).

Disordered regions lie at residues 123 to 179 (DDET…SEGE), 198 to 254 (MALG…IKGE), and 319 to 342 (GKGA…FSNM). Composition is skewed to polar residues over residues 141–152 (YRSQNDLQFNKS) and 165–174 (TEAGVTSTGV). Catalysis depends on cysteine 448, which acts as the Nucleophile. Catalysis depends on histidine 666, which acts as the Proton acceptor.

This sequence belongs to the MINDY deubiquitinase family. FAM188 subfamily.

The catalysed reaction is Thiol-dependent hydrolysis of ester, thioester, amide, peptide and isopeptide bonds formed by the C-terminal Gly of ubiquitin (a 76-residue protein attached to proteins as an intracellular targeting signal).. Probable hydrolase that can remove 'Lys-48'-linked conjugated ubiquitin from proteins. This is Probable ubiquitin carboxyl-terminal hydrolase MINDY-4 (mindy4) from Xenopus tropicalis (Western clawed frog).